The following is a 481-amino-acid chain: Protein JASON (481 aa).

A disordered region spans residues E226 to G250. Residues S232 to G241 are compositionally biased toward low complexity.

Functionally, required for normal spindle orientation at male meiosis II and normal formation of tetrad of microspores. Acts as a positive regulator of PS1 in male sporogenesis. Not involved in female meiosis. This chain is Protein JASON, found in Arabidopsis thaliana (Mouse-ear cress).